Consider the following 506-residue polypeptide: Probable alpha-L-arabinofuranosidase B (506 aa).

An N-terminal signal peptide occupies residues 1-26 (MLPQLSIERASVFALGLIATGSLVVA). A catalytic region spans residues 27–343 (GPCDIYSAGG…ANIVAAKYAT (317 aa)). Cystine bridges form between C29-C39, C89-C94, and C184-C185. D227 is a binding site for substrate. The active-site Nucleophile is the E229. Residue N230 participates in substrate binding. An N-linked (GlcNAc...) asparagine glycan is attached at N240. Residue G304 coordinates substrate. D305 functions as the Proton donor in the catalytic mechanism. An ABD region spans residues 344–506 (ASLTSGPKLT…VSWVISTGFA (163 aa)). C409 and C447 are joined by a disulfide. Substrate is bound by residues H424, N426, F427, D443, H471, L476, and D496.

It belongs to the glycosyl hydrolase 54 family.

Its subcellular location is the secreted. It carries out the reaction Hydrolysis of terminal non-reducing alpha-L-arabinofuranoside residues in alpha-L-arabinosides.. It functions in the pathway glycan metabolism; L-arabinan degradation. Its function is as follows. Alpha-L-arabinofuranosidase involved in the degradation of arabinoxylan, a major component of plant hemicellulose. Able to hydrolyze 1,5-, 1,3- and 1,2-alpha-linkages not only in L-arabinofuranosyl oligosaccharides, but also in polysaccharides containing terminal non-reducing L-arabinofuranoses in side chains, like L-arabinan, arabinogalactan and arabinoxylan. The protein is Probable alpha-L-arabinofuranosidase B (abfB) of Aspergillus fumigatus (strain ATCC MYA-4609 / CBS 101355 / FGSC A1100 / Af293) (Neosartorya fumigata).